The chain runs to 424 residues: Histidine--tRNA ligase (424 aa).

It belongs to the class-II aminoacyl-tRNA synthetase family. In terms of assembly, homodimer.

It localises to the cytoplasm. The enzyme catalyses tRNA(His) + L-histidine + ATP = L-histidyl-tRNA(His) + AMP + diphosphate + H(+). This Shigella sonnei (strain Ss046) protein is Histidine--tRNA ligase.